An 89-amino-acid chain; its full sequence is Small ribosomal subunit protein uS15 (89 aa).

Belongs to the universal ribosomal protein uS15 family. Part of the 30S ribosomal subunit. Forms a bridge to the 50S subunit in the 70S ribosome, contacting the 23S rRNA.

One of the primary rRNA binding proteins, it binds directly to 16S rRNA where it helps nucleate assembly of the platform of the 30S subunit by binding and bridging several RNA helices of the 16S rRNA. In terms of biological role, forms an intersubunit bridge (bridge B4) with the 23S rRNA of the 50S subunit in the ribosome. In Bordetella parapertussis (strain 12822 / ATCC BAA-587 / NCTC 13253), this protein is Small ribosomal subunit protein uS15.